A 206-amino-acid chain; its full sequence is Small ribosomal subunit protein uS4 (206 aa).

The S4 RNA-binding domain occupies 96 to 156 (GRLDNVVYRM…EKAKKQSRVK (61 aa)).

This sequence belongs to the universal ribosomal protein uS4 family. As to quaternary structure, part of the 30S ribosomal subunit. Contacts protein S5. The interaction surface between S4 and S5 is involved in control of translational fidelity.

In terms of biological role, one of the primary rRNA binding proteins, it binds directly to 16S rRNA where it nucleates assembly of the body of the 30S subunit. With S5 and S12 plays an important role in translational accuracy. The chain is Small ribosomal subunit protein uS4 from Serratia proteamaculans (strain 568).